The primary structure comprises 332 residues: ATP-dependent 6-phosphofructokinase (332 aa).

Gly-11 contributes to the ATP binding site. An ADP-binding site is contributed by 21-25 (RSVVR). Residues 72-73 (RC) and 102-105 (GDGS) each bind ATP. Asp-103 lines the Mg(2+) pocket. A substrate-binding site is contributed by 126–128 (TID). The Proton acceptor role is filled by Asp-128. Arg-155 is a binding site for ADP. Residues Arg-163 and 170–172 (MGR) contribute to the substrate site. ADP is bound by residues 186–188 (GAE), Arg-212, and 214–216 (KLH). Residues Glu-223, Arg-256, and 262-265 (HIQR) each bind substrate.

The protein belongs to the phosphofructokinase type A (PFKA) family. ATP-dependent PFK group I subfamily. Prokaryotic clade 'B1' sub-subfamily. As to quaternary structure, homotetramer. Mg(2+) is required as a cofactor.

The protein resides in the cytoplasm. It carries out the reaction beta-D-fructose 6-phosphate + ATP = beta-D-fructose 1,6-bisphosphate + ADP + H(+). The protein operates within carbohydrate degradation; glycolysis; D-glyceraldehyde 3-phosphate and glycerone phosphate from D-glucose: step 3/4. Its activity is regulated as follows. Allosterically activated by ADP and other diphosphonucleosides, and allosterically inhibited by phosphoenolpyruvate. Its function is as follows. Catalyzes the phosphorylation of D-fructose 6-phosphate to fructose 1,6-bisphosphate by ATP, the first committing step of glycolysis. The chain is ATP-dependent 6-phosphofructokinase from Halothermothrix orenii (strain H 168 / OCM 544 / DSM 9562).